Reading from the N-terminus, the 205-residue chain is MVNILHIDSSPRAERSHSRELSKEFVSAWRAAHPEDAIAYRDLGHHPVPHVNEAWIAAAFSPPETHTPELAEAIRVSDELVDEFLAADRYVFGVPMYNFNIPSTFKAYIDQIVRINRTVSLDAQGFRGLVEGKKAVIITARGGDFSATSPAVAYDFQEPYLRTIFGFIGITDIQFINANSLNEGDARTQSLAEARAAIQDAIAQW.

FMN is bound by residues serine 10, 16-18, and 96-99; these read SHS and MYNF.

Belongs to the azoreductase type 1 family. As to quaternary structure, homodimer. Requires FMN as cofactor.

It catalyses the reaction 2 a quinone + NADH + H(+) = 2 a 1,4-benzosemiquinone + NAD(+). It carries out the reaction N,N-dimethyl-1,4-phenylenediamine + anthranilate + 2 NAD(+) = 2-(4-dimethylaminophenyl)diazenylbenzoate + 2 NADH + 2 H(+). Functionally, quinone reductase that provides resistance to thiol-specific stress caused by electrophilic quinones. Also exhibits azoreductase activity. Catalyzes the reductive cleavage of the azo bond in aromatic azo compounds to the corresponding amines. The polypeptide is FMN-dependent NADH:quinone oxidoreductase (Nostoc punctiforme (strain ATCC 29133 / PCC 73102)).